The sequence spans 274 residues: NAD-dependent protein deacetylase (274 aa).

A Deacetylase sirtuin-type domain is found at 1-274; the sequence is MDSRMSDLQA…CDEVLAEVVP (274 aa). Residues 26–46 and 104–107 contribute to the NAD(+) site; these read GAGC…GQWK and QNVD. The active-site Proton acceptor is the His-122. Residues Cys-130, Cys-133, Cys-181, and Cys-184 each contribute to the Zn(2+) site. NAD(+)-binding positions include 221 to 223, 247 to 249, and Cys-265; these read GSS and NLG.

This sequence belongs to the sirtuin family. Class II subfamily. The cofactor is Zn(2+).

Its subcellular location is the cytoplasm. It carries out the reaction N(6)-acetyl-L-lysyl-[protein] + NAD(+) + H2O = 2''-O-acetyl-ADP-D-ribose + nicotinamide + L-lysyl-[protein]. NAD-dependent protein deacetylase which modulates the activities of several enzymes which are inactive in their acetylated form. This Bordetella pertussis (strain Tohama I / ATCC BAA-589 / NCTC 13251) protein is NAD-dependent protein deacetylase.